The following is a 366-amino-acid chain: MRPAQASIDLEALRHNYRLAKRLGGSKALAVVKADAYGHGAVPCAQALEPEADGFAVACIEEALELRQAGIRAPILLLEGFFEHDELRLIAEHDLWTVAATPQQVRALAAFQSPRPLRVWLKMDSGMHRLGLSPEDFRAAWLRLRGLPQIASLVLMTHLARADELDCSRTDEQAVAFALTAGGMRAETSLRNSPGLLGWPALRNDWSRPGLMLYGANPFPQDTENTAQLRPVMTLRSRIILVRDLPVGEPVGYGARFVAERPTRVGVVAMGYADGYPQFAPNGTPVLVDGQVCPLIGRVSMDMLTVDLTDHPQADIGATVQLWGQAPRVGPLATQCNVSAYQLLCGLKRVPRTYVASAAVGEVAAR.

The Proton acceptor; specific for D-alanine role is filled by lysine 33. Lysine 33 is modified (N6-(pyridoxal phosphate)lysine). Position 129 (arginine 129) interacts with substrate. Tyrosine 253 serves as the catalytic Proton acceptor; specific for L-alanine. Residue methionine 301 participates in substrate binding.

This sequence belongs to the alanine racemase family. Requires pyridoxal 5'-phosphate as cofactor.

It carries out the reaction L-alanine = D-alanine. It participates in amino-acid biosynthesis; D-alanine biosynthesis; D-alanine from L-alanine: step 1/1. In terms of biological role, catalyzes the interconversion of L-alanine and D-alanine. May also act on other amino acids. This Xanthomonas oryzae pv. oryzae (strain MAFF 311018) protein is Alanine racemase (alr).